Reading from the N-terminus, the 369-residue chain is Sulfate permease 2, chloroplastic (369 aa).

Residues 1 to 21 (MASTTLLQPALGLPSRVGPRS) form a disordered region. The transit peptide at 1–82 (MASTTLLQPA…QQSRGDLLVS (82 aa)) directs the protein to the chloroplast. Helical transmembrane passes span 110–130 (VGVAAAYIGLVVLVPFLNVFV), 156–176 (TLMLAFVTVPLNTVFGTVAAI), 187–207 (VFLMSLLDLPFSISPVVTGLM), 229–249 (VVFAFTGMALATMFVTLPFVV), and 335–355 (TEAAFAAAVLLSALALGTLWI). In terms of domain architecture, ABC transmembrane type-1 spans 153–356 (LKMTLMLAFV…ALALGTLWIK (204 aa)).

This sequence belongs to the ATP-binding cassette (ABC) (TC 3.A.1) superfamily. Part of the chloroplast sulfate permease holocomplex. May form a heterodimer with SLUP1.

The protein localises to the plastid. It localises to the chloroplast membrane. Functionally, part of the ABC-type chloroplast envelope-localized sulfate transporter. The protein is Sulfate permease 2, chloroplastic (SULP2) of Chlamydomonas reinhardtii (Chlamydomonas smithii).